Here is a 517-residue protein sequence, read N- to C-terminus: FERM domain-containing protein 5 (517 aa).

The FERM domain occupies 17–298; that stretch reads YSCTVRLLDD…ENQAFYKLEK (282 aa). The tract at residues 308 to 353 is interaction with ROCK1; the sequence is SNLFFKGSRFRYSGRVAKEVMESSAKIKREPPEIHRAGMVPSRSCP. The disordered stretch occupies residues 344 to 367; the sequence is AGMVPSRSCPSITHGPRLSSVPRT. S375 carries the phosphoserine modification. Disordered regions lie at residues 385–408 and 485–517; these read DSAH…VRSS and GHGG…VPLD. The span at 388–398 shows a compositional bias: polar residues; the sequence is HSTPVRSSSHG. Residues 498 to 517 are compositionally biased toward low complexity; the sequence is KGPQLQQQQWKGWGKSVPLD.

In terms of assembly, interacts with CTNND1, ITGB5 (via cytoplasmic domain) and ROCK1.

The protein localises to the cell junction. It is found in the adherens junction. Functionally, may be involved in regulation of cell migration. May regulate cell-matrix interactions via its interaction with ITGB5 and modifying ITGB5 cytoplasmic tail interactions such as with FERMT2 and TLN1. May regulate ROCK1 kinase activity possibly involved in regulation of actin stress fiber formation. The sequence is that of FERM domain-containing protein 5 (Frmd5) from Mus musculus (Mouse).